The sequence spans 249 residues: UPF0246 protein Lreu_0493 (249 aa).

This sequence belongs to the UPF0246 family.

This is UPF0246 protein Lreu_0493 from Limosilactobacillus reuteri (strain DSM 20016) (Lactobacillus reuteri).